A 199-amino-acid polypeptide reads, in one-letter code: MKQLVLASGNAGKLGELRAMLAGVALQITAQSEFGVQDVPETGLTFIENALIKARHACLMTGFPALADDSGLIVDALGGAPGLYSARYAGTPTDAAANNAKLLEMLRDVPVGRRSARFYAVIVLLRHAEDPQPLIADGCWEGEIVFEPCGSGGFGYNPIFFDPLYGMTAAQMGAELKNKISHRARALEQLRDCLHTFMA.

Residue 8-13 (SGNAGK) coordinates substrate. D69 functions as the Proton acceptor in the catalytic mechanism. D69 is a binding site for Mg(2+). Substrate-binding positions include S70, 154–157 (FGYN), K177, and 182–183 (HR).

The protein belongs to the HAM1 NTPase family. Homodimer. It depends on Mg(2+) as a cofactor.

The enzyme catalyses XTP + H2O = XMP + diphosphate + H(+). It carries out the reaction dITP + H2O = dIMP + diphosphate + H(+). The catalysed reaction is ITP + H2O = IMP + diphosphate + H(+). Functionally, pyrophosphatase that catalyzes the hydrolysis of nucleoside triphosphates to their monophosphate derivatives, with a high preference for the non-canonical purine nucleotides XTP (xanthosine triphosphate), dITP (deoxyinosine triphosphate) and ITP. Seems to function as a house-cleaning enzyme that removes non-canonical purine nucleotides from the nucleotide pool, thus preventing their incorporation into DNA/RNA and avoiding chromosomal lesions. In Xylella fastidiosa (strain 9a5c), this protein is dITP/XTP pyrophosphatase.